Here is a 3411-residue protein sequence, read N- to C-terminus: Genome polyprotein (3411 aa).

Residues 1-104 (MSGRKAQGKT…LSSRKRRSHD (104 aa)) lie on the Cytoplasmic side of the membrane. The interval 38–72 (PGPSRGVQGFIFFFLFNILTGKKITAHLKRLWKML) is hydrophobic; homodimerization of capsid protein C. A propeptide spans 102–121 (SHDVLTVQFLILGMLLMTGG) (ER anchor for the capsid protein C, removed in mature form by serine protease NS3). A helical membrane pass occupies residues 105–125 (VLTVQFLILGMLLMTGGVTLV). Over 126-244 (RKNRWLLLNV…GERQLQKIER (119 aa)) the chain is Extracellular. Asn-134 and Asn-150 each carry an N-linked (GlcNAc...) asparagine; by host glycan. Residues 245-265 (WFVRNPFFAVTALTIAYLVGS) traverse the membrane as a helical segment. Residues 266-270 (NMTQR) lie on the Cytoplasmic side of the membrane. The helical transmembrane segment at 271 to 285 (VVIALLVLAVGPAYS) threads the bilayer. Topologically, residues 286-730 (AHCIGITDRD…TVFGSAFQGL (445 aa)) are extracellular. 8 disulfide bridges follow: Cys-288-Cys-315, Cys-345-Cys-401, Cys-345-Cys-406, Cys-359-Cys-390, Cys-377-Cys-401, Cys-377-Cys-406, Cys-467-Cys-568, and Cys-585-Cys-615. The tract at residues 383–396 (DRGWGNGCGLFGKG) is fusion peptide. The chain crosses the membrane as a helical span at residues 731 to 751 (FGGLNWITKVIMGAVLIWVGI). At 752–757 (NTRNMT) the chain is on the extracellular side. Residues 758-778 (MSMSMILVGVIMMFLSLGVGA) form a helical membrane-spanning segment. The Extracellular segment spans residues 779 to 1132 (DQGCAINFGK…LVRSWVTAGE (354 aa)). 6 disulfides stabilise this stretch: Cys-782–Cys-793, Cys-833–Cys-921, Cys-957–Cys-1002, Cys-1058–Cys-1107, Cys-1069–Cys-1091, and Cys-1090–Cys-1094. Asn-908 and Asn-986 each carry an N-linked (GlcNAc...) asparagine; by host glycan. Residues 1133-1153 (IHAVPFGLVSMMIAMEVVLRK) traverse the membrane as a helical segment. Residues 1154-1201 (RQGPKQMLVGGVVLLGAMLVGQVTLLDLLKLTVAVGLHFHEMNNGGDA) lie on the Cytoplasmic side of the membrane. Residues 1202–1222 (MYMALIAAFSIRPGLLIGFGL) traverse the membrane as a helical segment. Over 1223 to 1287 (RTLWSPRERL…ILPLMALLTP (65 aa)) the chain is Lumenal. Residues 1288 to 1308 (VTMAEVRLAAMFFCAVVIIGV) form a helical membrane-spanning segment. The Cytoplasmic segment spans residues 1309-1355 (LHQNFKDTSMQKTIPLVALTLTSYLGLTQPFLGLCAFLATRIFGRRS). The chain crosses the membrane as a helical span at residues 1356-1376 (IPVNEALAAAGLVGVLAGLAF). The Lumenal segment spans residues 1377-1378 (QE). Residues 1379 to 1399 (MENFLGPIAVGGLLMMLVSVA) traverse the membrane as a helical segment. Over 1400–1456 (GRVDGLELKKLGEVSWEEEAEISGSSARYDVALSEQGEFKLLSEEKVPWDQVVMTSL) the chain is Cytoplasmic. Residues 1407–1446 (LKKLGEVSWEEEAEISGSSARYDVALSEQGEFKLLSEEKV) form an interacts with and activates NS3 protease region. The segment at residues 1457–1477 (ALVGAALHPFALLLVLAGWLF) is an intramembrane region (helical). The Cytoplasmic segment spans residues 1478–2157 (HVRGARRSGD…RNALSMMPEA (680 aa)). Positions 1485-1665 (SGDVLWDIPT…EVKEEGKEEL (181 aa)) constitute a Peptidase S7 domain. Catalysis depends on charge relay system; for serine protease NS3 activity residues His-1537, Asp-1561, and Ser-1622. The region spanning 1669–1825 (PTMLKKGMTT…HSNGEIEDVQ (157 aa)) is the Helicase ATP-binding domain. The segment at 1673–1676 (KKGM) is important for RNA-binding. Position 1682-1689 (1682-1689 (FHPGAGKT)) interacts with ATP. Residues 1773 to 1776 (DEAH) carry the DEAH box motif. Positions 1820–1997 (EIEDVQTDIP…VRGGMVAPLY (178 aa)) constitute a Helicase C-terminal domain. Lys-1877 carries the post-translational modification N6-acetyllysine; by host. A helical transmembrane segment spans residues 2158-2178 (MTIVMLFILAGLLTSGMVIFF). Residues 2179–2186 (MSPKGISR) lie on the Lumenal side of the membrane. The helical intramembrane region spans 2187 to 2207 (MSMAMGTMAGCGYLMFLGGVK). Over 2208–2209 (PT) the chain is Lumenal. Residues 2210-2230 (HISYVMLIFFVLMVVVIPEPG) traverse the membrane as a helical segment. The Cytoplasmic segment spans residues 2231–2241 (QQRSIQDNQVA). The chain crosses the membrane as a helical span at residues 2242–2262 (YLIIGILTLVSAVAANELGML). The Lumenal portion of the chain corresponds to 2263–2293 (EKTKEDLFGKKNLIPSSASPWSWPDLDLKPG). Residues 2294 to 2314 (AAWTVYVGIVTMLSPMLHHWI) constitute an intramembrane region (helical). Residues 2315–2360 (KVEYGNLSLSGIAQSASVLSFMDKGIPFMKMNISVIMLLVSGWNSI) lie on the Lumenal side of the membrane. Residues 2361–2381 (TVMPLLCGIGCAMLHWSLILP) traverse the membrane as a helical segment. The Cytoplasmic portion of the chain corresponds to 2382-2421 (GIKAQQSKLAQRRVFHGVAENPVVDGNPTVDIEEAPEMPA). A helical membrane pass occupies residues 2422 to 2442 (LYEKKLALYLLLALSLASVAM). The Lumenal segment spans residues 2443–2445 (CRT). The chain crosses the membrane as a helical span at residues 2446–2466 (PFSLAEGIVLASAALGPLIEG). The Cytoplasmic portion of the chain corresponds to 2467–3411 (NTSLLWNGPM…DADLQLGELI (945 aa)). The region spanning 2507 to 2771 (GSANGKTLGE…DVILPIGTRS (265 aa)) is the mRNA cap 0-1 NS5-type MT domain. Ser-2562 contacts S-adenosyl-L-methionine. Ser-2562 bears the Phosphoserine mark. The active-site For 2'-O-MTase activity is the Lys-2567. Positions 2592, 2593, 2610, 2611, 2637, and 2638 each coordinate S-adenosyl-L-methionine. Asp-2652 serves as the catalytic For 2'-O-MTase activity. Ile-2653 provides a ligand contact to S-adenosyl-L-methionine. Catalysis depends on for 2'-O-MTase activity residues Lys-2688 and Glu-2724. Tyr-2726 is a binding site for S-adenosyl-L-methionine. Positions 2878–2911 (RKIMKVVNRWLFRHLAREKNPRLCTKEEFIAKVR) match the Nuclear localization signal motif. Zn(2+)-binding residues include Glu-2945, His-2949, Cys-2954, and Cys-2957. A RdRp catalytic domain is found at 3035-3187 (GGFYADDTAG…RPIDDRFGLA (153 aa)). 3 residues coordinate Zn(2+): His-3222, Cys-3238, and Cys-3357.

In the N-terminal section; belongs to the class I-like SAM-binding methyltransferase superfamily. mRNA cap 0-1 NS5-type methyltransferase family. As to quaternary structure, homodimer. Interacts (via N-terminus) with host EXOC1 (via C-terminus); this interaction results in EXOC1 degradation through the proteasome degradation pathway. Forms heterodimers with envelope protein E in the endoplasmic reticulum and Golgi. In terms of assembly, homodimer; in the endoplasmic reticulum and Golgi. Interacts with protein prM. Interacts with non-structural protein 1. As to quaternary structure, homodimer; Homohexamer when secreted. Interacts with envelope protein E. Interacts (via N-terminus) with serine protease NS3. In terms of assembly, forms a heterodimer with serine protease NS3. May form homooligomers. As to quaternary structure, forms a heterodimer with NS2B. Interacts with non-structural protein 2A (via N-terminus). Interacts with NS4B. Interacts with unphosphorylated RNA-directed RNA polymerase NS5; this interaction stimulates RNA-directed RNA polymerase NS5 guanylyltransferase activity. NS3 interacts with host PDCD6IP; this interaction contributes to virion release. Interacts with serine protease NS3. In terms of assembly, homodimer. Interacts with host STAT2; this interaction prevents the establishment of cellular antiviral state. Interacts with serine protease NS3. Interacts with host TRIM23; this interaction leads to NS5 ubiquitination. In terms of processing, specific enzymatic cleavages in vivo yield mature proteins. The nascent capsid protein C contains a C-terminal hydrophobic domain that act as a signal sequence for translocation of prM into the lumen of the ER. Mature capsid protein C is cleaved at a site upstream of this hydrophobic domain by NS3. prM is cleaved in post-Golgi vesicles by a host furin, releasing the mature small envelope protein M, and peptide pr. Non-structural protein 2A-alpha, a C-terminally truncated form of non-structural protein 2A, results from partial cleavage by NS3. Specific enzymatic cleavages in vivo yield mature proteins peptide 2K acts as a signal sequence and is removed from the N-terminus of NS4B by the host signal peptidase in the ER lumen. Signal cleavage at the 2K-4B site requires a prior NS3 protease-mediated cleavage at the 4A-2K site. Cleaved in post-Golgi vesicles by a host furin, releasing the mature small envelope protein M, and peptide pr. This cleavage is incomplete as up to 30% of viral particles still carry uncleaved prM. Post-translationally, N-glycosylated. In terms of processing, N-glycosylated. The excreted form is glycosylated and this is required for efficient secretion of the protein from infected cells. Polyubiquitinated; ubiquitination is probably mediated by host TRIM23 and is prerequisite for NS5-STAT2 interaction. NS5 is not ISGylated or sumoylated. Post-translationally, acetylated by host KAT5. Acetylation modulates NS3 RNA-binding and unwinding activities and plays an important positive role for viral replication. In terms of processing, phosphorylated on serines residues. This phosphorylation may trigger NS5 nuclear localization.

Its subcellular location is the virion. The protein localises to the host nucleus. It localises to the host cytoplasm. The protein resides in the host perinuclear region. It is found in the secreted. Its subcellular location is the virion membrane. The protein localises to the host endoplasmic reticulum membrane. It carries out the reaction Selective hydrolysis of -Xaa-Xaa-|-Yaa- bonds in which each of the Xaa can be either Arg or Lys and Yaa can be either Ser or Ala.. The catalysed reaction is RNA(n) + a ribonucleoside 5'-triphosphate = RNA(n+1) + diphosphate. It catalyses the reaction a ribonucleoside 5'-triphosphate + H2O = a ribonucleoside 5'-diphosphate + phosphate + H(+). The enzyme catalyses ATP + H2O = ADP + phosphate + H(+). It carries out the reaction a 5'-end (5'-triphosphoguanosine)-ribonucleoside in mRNA + S-adenosyl-L-methionine = a 5'-end (N(7)-methyl 5'-triphosphoguanosine)-ribonucleoside in mRNA + S-adenosyl-L-homocysteine. The catalysed reaction is a 5'-end (N(7)-methyl 5'-triphosphoguanosine)-ribonucleoside in mRNA + S-adenosyl-L-methionine = a 5'-end (N(7)-methyl 5'-triphosphoguanosine)-(2'-O-methyl-ribonucleoside) in mRNA + S-adenosyl-L-homocysteine + H(+). Its function is as follows. Plays a role in virus budding by binding to the cell membrane and gathering the viral RNA into a nucleocapsid that forms the core of a mature virus particle. During virus entry, may induce genome penetration into the host cytoplasm after hemifusion induced by the surface proteins. Can migrate to the cell nucleus where it modulates host functions. Inhibits RNA silencing by interfering with host Dicer. In terms of biological role, prevents premature fusion activity of envelope proteins in trans-Golgi by binding to envelope protein E at pH6.0. After virion release in extracellular space, gets dissociated from E dimers. Functionally, acts as a chaperone for envelope protein E during intracellular virion assembly by masking and inactivating envelope protein E fusion peptide. prM is the only viral peptide matured by host furin in the trans-Golgi network probably to avoid catastrophic activation of the viral fusion activity in acidic Golgi compartment prior to virion release. prM-E cleavage is inefficient, and many virions are only partially matured. These uncleaved prM would play a role in immune evasion. Its function is as follows. May play a role in virus budding. Exerts cytotoxic effects by activating a mitochondrial apoptotic pathway through M ectodomain. May display a viroporin activity. Binds to host cell surface receptor and mediates fusion between viral and cellular membranes. Envelope protein is synthesized in the endoplasmic reticulum in the form of heterodimer with protein prM. They play a role in virion budding in the ER, and the newly formed immature particle is covered with 60 spikes composed of heterodimer between precursor prM and envelope protein E. The virion is transported to the Golgi apparatus where the low pH causes dissociation of PrM-E heterodimers and formation of E homodimers. prM-E cleavage is inefficient, and many virions are only partially matured. These uncleaved prM would play a role in immune evasion. In terms of biological role, involved in immune evasion, pathogenesis and viral replication. Once cleaved off the polyprotein, is targeted to three destinations: the viral replication cycle, the plasma membrane and the extracellular compartment. Essential for viral replication. Required for formation of the replication complex and recruitment of other non-structural proteins to the ER-derived membrane structures. Excreted as a hexameric lipoparticle that plays a role against host immune response. Antagonizing the complement function. Binds to the host macrophages and dendritic cells. Inhibits signal transduction originating from Toll-like receptor 3 (TLR3). Functionally, component of the viral RNA replication complex that functions in virion assembly and antagonizes the host immune response. Its function is as follows. Required cofactor for the serine protease function of NS3. May have membrane-destabilizing activity and form viroporins. Displays three enzymatic activities: serine protease, NTPase and RNA helicase. NS3 serine protease, in association with NS2B, performs its autocleavage and cleaves the polyprotein at dibasic sites in the cytoplasm: C-prM, NS2A-NS2B, NS2B-NS3, NS3-NS4A, NS4A-2K and NS4B-NS5. NS3 RNA helicase binds RNA and unwinds dsRNA in the 3' to 5' direction. Also plays a role in virus assembly. In terms of biological role, regulates the ATPase activity of the NS3 helicase activity. NS4A allows NS3 helicase to conserve energy during unwinding. Functionally, functions as a signal peptide for NS4B and is required for the interferon antagonism activity of the latter. Its function is as follows. Induces the formation of ER-derived membrane vesicles where the viral replication takes place. Inhibits interferon (IFN)-induced host STAT1 phosphorylation and nuclear translocation, thereby preventing the establishment of cellular antiviral state by blocking the IFN-alpha/beta pathway. Replicates the viral (+) and (-) RNA genome, and performs the capping of genomes in the cytoplasm. NS5 methylates viral RNA cap at guanine N-7 and ribose 2'-O positions. Besides its role in RNA genome replication, also prevents the establishment of cellular antiviral state by blocking the interferon-alpha/beta (IFN-alpha/beta) signaling pathway. IFN-I induces binding of NS5 to host IFN-activated transcription factor STAT2, preventing its transcriptional activity. Host TRIM23 is the E3 ligase that interacts with and polyubiquitinates NS5 to promote its binding to STAT2 and trigger IFN-I signaling inhibition. This chain is Genome polyprotein, found in Aedes aegypti (Yellowfever mosquito).